A 280-amino-acid polypeptide reads, in one-letter code: MRGVSCLQVLLLLVLGAAGTQGRKSAACGQPRMSSRIVGGRDGRDGEWPWQASIQHRGAHVCGGSLIAPQWVLTAAHCFPRRALPAEYRVRLGALRLGSTSPRTLSVPVRRVLLPPDYSEDGARGDLALLQLRRPVPLSARVQPVCLPVPGARPPPGTPCRVTGWGSLRPGVPLPEWRPLQGVRVPLLDSRTCDGLYHVGADVPQAERIVLPGSLCAGYPQGHKDACQGDSGGPLTCLQSGSWVLVGVVSWGKGCALPNRPGVYTSVATYSPWIQARVSF.

The N-terminal stretch at 1-22 (MRGVSCLQVLLLLVLGAAGTQG) is a signal peptide. A Peptidase S1 domain is found at 37–279 (IVGGRDGRDG…YSPWIQARVS (243 aa)). A disulfide bond links C62 and C78. Catalysis depends on charge relay system residues H77 and D126. 3 disulfides stabilise this stretch: C160–C237, C193–C216, and C227–C255. S231 serves as the catalytic Charge relay system.

Belongs to the peptidase S1 family. Predominantly expressed in macrophages. Present in the spleen, small and large intestine, lung and brain (at protein level). Highly expressed in peripheral leukocytes, ovary, retina, spleen and stomach. Moderately expressed in thymus, uterus and platelets, as well as some brain tissues, such as thalamus and fetal brain.

The protein resides in the secreted. Serine protease that has amidolytic activity, cleaving its substrates before Arg residues. The sequence is that of Serine protease 33 (PRSS33) from Homo sapiens (Human).